Here is a 452-residue protein sequence, read N- to C-terminus: Ribosomal protein uS12 methylthiotransferase RimO (452 aa).

In terms of domain architecture, MTTase N-terminal spans 3–118 (GKIGFVSLGC…VMQVIHLHLP (116 aa)). The [4Fe-4S] cluster site is built by Cys12, Cys48, Cys77, Cys149, Cys153, and Cys156. The Radical SAM core domain occupies 135 to 382 (LTPKHYAYLK…AKAEEISVGR (248 aa)). The region spanning 384–452 (AKKIGKRLQV…SQGHDLIAET (69 aa)) is the TRAM domain.

The protein belongs to the methylthiotransferase family. RimO subfamily. Requires [4Fe-4S] cluster as cofactor.

It is found in the cytoplasm. It carries out the reaction L-aspartate(89)-[ribosomal protein uS12]-hydrogen + (sulfur carrier)-SH + AH2 + 2 S-adenosyl-L-methionine = 3-methylsulfanyl-L-aspartate(89)-[ribosomal protein uS12]-hydrogen + (sulfur carrier)-H + 5'-deoxyadenosine + L-methionine + A + S-adenosyl-L-homocysteine + 2 H(+). Its function is as follows. Catalyzes the methylthiolation of an aspartic acid residue of ribosomal protein uS12. In Polynucleobacter necessarius subsp. necessarius (strain STIR1), this protein is Ribosomal protein uS12 methylthiotransferase RimO.